The chain runs to 212 residues: uncharacterized protein (212 aa).

Residues 1 to 88 form a disordered region; that stretch reads MAEEQKIALE…PAPAKPASAS (88 aa). S13 bears the Phosphoserine mark. Residues 23–41 show a composition bias toward pro residues; the sequence is ADTPAPAPAEIPAPAPAPT. Basic and acidic residues predominate over residues 45–54; sequence VTKDVAEEKI.

This sequence belongs to the remorin family.

It is found in the cell membrane. This is an uncharacterized protein from Arabidopsis thaliana (Mouse-ear cress).